The following is a 501-amino-acid chain: Microtubule-associated protein mmb1 (501 aa).

3 stretches are compositionally biased toward polar residues: residues 61 to 95 (NISS…TNNV), 103 to 122 (RNPS…SNNA), and 132 to 168 (HENS…SSNA). 3 disordered regions span residues 61 to 274 (NISS…VKVN), 328 to 381 (VSRN…TTGN), and 478 to 501 (NQTS…NRMI). Positions 234-252 (SSVVRPPTRTSTTRPLSRV) are enriched in low complexity. Composition is skewed to polar residues over residues 253 to 274 (NVTN…VKVN), 367 to 381 (SRIQ…TTGN), and 478 to 495 (NQTS…SSPL).

It is found in the cytoplasm. Its subcellular location is the cytoskeleton. Involved in the cell polarity process and in regulation of microtubule growth. Has a role in meiosis. Involved in microtubule dynamics. Binds to mitochondria and microtubules, attaching the tubular mitochondria to the microtubule lattice at multiple discrete interaction sites. The sequence is that of Microtubule-associated protein mmb1 from Schizosaccharomyces pombe (strain 972 / ATCC 24843) (Fission yeast).